We begin with the raw amino-acid sequence, 114 residues long: Vesicle-associated membrane protein 2 (114 aa).

Pro residues predominate over residues Met1–Ala11. Residues Met1–Gln31 are disordered. Ser2 carries the post-translational modification N-acetylserine. Topologically, residues Ser2–Lys92 are cytoplasmic. In terms of domain architecture, v-SNARE coiled-coil homology spans Arg29–Lys89. Residues Met93 to Tyr111 traverse the membrane as a helical; Anchor for type IV membrane protein segment. Topologically, residues Phe112–Thr114 are vesicular.

Belongs to the synaptobrevin family.

The protein resides in the cytoplasmic vesicle. Its subcellular location is the secretory vesicle. It localises to the synaptic vesicle membrane. It is found in the cell membrane. Functionally, involved in the targeting and/or fusion of transport vesicles to their target membrane. Major SNARE protein of synaptic vesicles which mediates fusion of synaptic vesicles to release neurotransmitters. Essential for fast vesicular exocytosis and activity-dependent neurotransmitter release as well as fast endocytosis that mediates rapid reuse of synaptic vesicles. In Xenopus laevis (African clawed frog), this protein is Vesicle-associated membrane protein 2 (vamp2).